Reading from the N-terminus, the 251-residue chain is Large ribosomal subunit protein uL16m (251 aa).

A mitochondrion-targeting transit peptide spans M1–G29.

This sequence belongs to the universal ribosomal protein uL16 family. As to quaternary structure, component of the mitochondrial ribosome large subunit (39S) which comprises a 16S rRNA and about 50 distinct proteins.

Its subcellular location is the mitochondrion. This chain is Large ribosomal subunit protein uL16m (MRPL16), found in Bos taurus (Bovine).